The primary structure comprises 272 residues: Small ribosomal subunit protein uS2 (272 aa).

A disordered region spans residues Glu-244–Glu-272.

This sequence belongs to the universal ribosomal protein uS2 family.

The chain is Small ribosomal subunit protein uS2 from Trichodesmium erythraeum (strain IMS101).